The following is a 199-amino-acid chain: RNA pyrophosphohydrolase (199 aa).

Residues 6-154 (GYRPNVGIVL…KREVYELALS (149 aa)) enclose the Nudix hydrolase domain. Residues 38–59 (GGIQHGESPEQAMYRELHEEVG) carry the Nudix box motif.

This sequence belongs to the Nudix hydrolase family. RppH subfamily. A divalent metal cation is required as a cofactor.

Accelerates the degradation of transcripts by removing pyrophosphate from the 5'-end of triphosphorylated RNA, leading to a more labile monophosphorylated state that can stimulate subsequent ribonuclease cleavage. This is RNA pyrophosphohydrolase from Polynucleobacter asymbioticus (strain DSM 18221 / CIP 109841 / QLW-P1DMWA-1) (Polynucleobacter necessarius subsp. asymbioticus).